We begin with the raw amino-acid sequence, 353 residues long: Probable tRNA pseudouridine synthase B (353 aa).

Aspartate 45 functions as the Nucleophile in the catalytic mechanism. The PUA domain occupies 211-287 (YPKIVAKKSA…DHIFVEAKHG (77 aa)). Residues 292–353 (VRDREKDVQR…TGVHRRPGSH (62 aa)) are disordered. The segment covering 309 to 328 (NIRDAAHGPDSRTGRGRKET) has biased composition (basic and acidic residues). Residues 336 to 353 (RVRKLQNKTGVHRRPGSH) are compositionally biased toward basic residues.

This sequence belongs to the pseudouridine synthase TruB family. Type 2 subfamily.

The catalysed reaction is uridine(55) in tRNA = pseudouridine(55) in tRNA. In terms of biological role, could be responsible for synthesis of pseudouridine from uracil-55 in the psi GC loop of transfer RNAs. The protein is Probable tRNA pseudouridine synthase B of Thermoplasma volcanium (strain ATCC 51530 / DSM 4299 / JCM 9571 / NBRC 15438 / GSS1).